The chain runs to 327 residues: Porphobilinogen deaminase (327 aa).

Residue Cys-251 is modified to S-(dipyrrolylmethanemethyl)cysteine.

This sequence belongs to the HMBS family. Dipyrromethane serves as cofactor.

It carries out the reaction 4 porphobilinogen + H2O = hydroxymethylbilane + 4 NH4(+). Its pathway is porphyrin-containing compound metabolism; protoporphyrin-IX biosynthesis; coproporphyrinogen-III from 5-aminolevulinate: step 2/4. Tetrapolymerization of the monopyrrole PBG into the hydroxymethylbilane pre-uroporphyrinogen in several discrete steps. The polypeptide is Porphobilinogen deaminase (HEM3) (Kluyveromyces lactis (strain ATCC 8585 / CBS 2359 / DSM 70799 / NBRC 1267 / NRRL Y-1140 / WM37) (Yeast)).